We begin with the raw amino-acid sequence, 317 residues long: Melanoma-associated antigen 4 (317 aa).

The span at 1 to 14 (MSSEQKSQHCKPEE) shows a compositional bias: basic and acidic residues. The interval 1–102 (MSSEQKSQHC…EEGPSTSPDA (102 aa)) is disordered. A compositionally biased stretch (polar residues) spans 66 to 82 (PQGASALPTTISFTCWR). The 200-residue stretch at 110 to 309 (LSNKVDELAH…IAYPSLREAA (200 aa)) folds into the MAGE domain.

In terms of tissue distribution, expressed in many tumors of several types, such as melanoma, head and neck squamous cell carcinoma, lung carcinoma and breast carcinoma, but not in normal tissues except for testes and placenta.

Its function is as follows. Regulates cell proliferation through the inhibition of cell cycle arrest at the G1 phase. Also negatively regulates p53-mediated apoptosis. The polypeptide is Melanoma-associated antigen 4 (MAGEA4) (Homo sapiens (Human)).